The sequence spans 510 residues: Replication factor C large subunit (510 aa).

48 to 55 is an ATP binding site; the sequence is GPPGTGKT. A disordered region spans residues 459-510; that stretch reads MESMLERKREESEVEEEAKEIEEAVEKAEEEEEREEKKKEGGGEQRTLDAFF. Residues 493–510 show a composition bias toward basic and acidic residues; it reads EEKKKEGGGEQRTLDAFF.

It belongs to the activator 1 small subunits family. RfcL subfamily. Heteromultimer composed of small subunits (RfcS) and large subunits (RfcL).

In terms of biological role, part of the RFC clamp loader complex which loads the PCNA sliding clamp onto DNA. The chain is Replication factor C large subunit from Methanopyrus kandleri (strain AV19 / DSM 6324 / JCM 9639 / NBRC 100938).